A 303-amino-acid polypeptide reads, in one-letter code: Mitochondrial carrier homolog 2 (303 aa).

A2 is modified (N-acetylalanine). The Mitochondrial intermembrane segment spans residues 2 to 15; it reads ADAASQVLLGSGLT. Solcar repeat units follow at residues 2-98 and 118-206; these read ADAA…YQES and DRVI…INTY. A helical membrane pass occupies residues 16 to 36; sequence ILSQPLMYVKVLIQVGYEPLP. Residues 37 to 77 are Cytoplasmic-facing; that stretch reads PTIGRNIFGRQVCQLPGLFCYAQHIASIDGRRGLFTGLTPR. Residues 78–92 form a helical membrane-spanning segment; sequence LCSGVLGTVVHGKVL. Over 93–135 the chain is Mitochondrial intermembrane; that stretch reads QYYQESEKPEELGSVTVQKEYSSSFDRVIKETTREMIARSAAT. The chain crosses the membrane as a helical span at residues 136–156; sequence LITHPFHVITLRSMVQFIGRE. Residues 157–180 are Cytoplasmic-facing; sequence SKYCGLCDSIVTIYREEGIVGFFA. A helical membrane pass occupies residues 181–199; it reads GLIPRLLGDIISLWLCNSL. At 200–231 the chain is on the mitochondrial intermembrane side; sequence AYLINTYALDSGVSTMNEMKSYSQAVTGFFAS. The helical transmembrane segment at 232–252 threads the bilayer; sequence MLTYPFVLVSNLMAVNNCGLA. Over 253-280 the chain is Cytoplasmic; sequence GGSPPYSPIYTSWIDCWCMLQKAGNMSR. A helical transmembrane segment spans residues 281–303; the sequence is GNSLFFRKVPCGKTYCYDLRMLI.

Belongs to the mitochondrial carrier (TC 2.A.29) family. As to quaternary structure, interacts with p15BID. As to expression, expressed in a wide variety of tissues. Predominant expressed in liver, kidney, heart, skeletal muscle and testis.

Its subcellular location is the mitochondrion outer membrane. Its function is as follows. Protein insertase that mediates insertion of transmembrane proteins into the mitochondrial outer membrane. Catalyzes insertion of proteins with alpha-helical transmembrane regions, such as signal-anchored, tail-anchored and multi-pass membrane proteins. Does not mediate insertion of beta-barrel transmembrane proteins. Also acts as a receptor for the truncated form of pro-apoptotic BH3-interacting domain death agonist (p15 BID) and has therefore a critical function in apoptosis. Regulates the quiescence/cycling of hematopoietic stem cells (HSCs). Acts as a regulator of mitochondrial fusion, essential for the naive-to-primed interconversion of embryonic stem cells (ESCs). Acts as a regulator of lipid homeostasis and has a regulatory role in adipocyte differentiation and biology. In Mus musculus (Mouse), this protein is Mitochondrial carrier homolog 2.